The primary structure comprises 246 residues: UDP-N-acetyl-D-mannosaminuronic acid transferase (246 aa).

This sequence belongs to the glycosyltransferase 26 family.

It carries out the reaction UDP-N-acetyl-alpha-D-mannosaminouronate + N-acetyl-alpha-D-glucosaminyl-di-trans,octa-cis-undecaprenyl diphosphate = beta-D-ManNAcA-(1-&gt;4)-alpha-D-GlcNAc-di-trans,octa-cis-undecaprenyl diphosphate + UDP + H(+). The protein operates within bacterial outer membrane biogenesis; enterobacterial common antigen biosynthesis. Its function is as follows. Catalyzes the synthesis of Und-PP-GlcNAc-ManNAcA (Lipid II), the second lipid-linked intermediate involved in enterobacterial common antigen (ECA) synthesis. The protein is UDP-N-acetyl-D-mannosaminuronic acid transferase of Escherichia fergusonii (strain ATCC 35469 / DSM 13698 / CCUG 18766 / IAM 14443 / JCM 21226 / LMG 7866 / NBRC 102419 / NCTC 12128 / CDC 0568-73).